Reading from the N-terminus, the 670-residue chain is MDLHQSATVRLLQEWCSHESPSGCRRHYNTRKKLKLIRVIGLVMGLVAVSTVPFSISAFTETYSQNNRGEASDVTGPRAAPGHRQRTLLDLNDKIRDYTPQPPASQEDRSENGTDHAQGDYPKDVFSLEERRKGAIILHVIGMIYMFIALAIVCDEFFVPSLTVITEKLGISDDVAGATFMAAGGSAPELFTSLIGVFIAHSNVGIGTIVGSAVFNILFVIGMCALFSREILNLTWWPLFRDVSFYIVDLIMLIIFFLDNVIMWWESLLLLTAYFAYVVFMKFNVQVERWVKQMINRNKVVKVTVSEAQAKASTAGDKEEPTLPNKPRLQRGGSSASLHNSLMRNSIFQLMIHTLDPLAEELGSYGKLKYYDTMTEEGRFREKASILHKIAKKKCQVDENERQNGAANHVDYAAEKIELPNSTSTEVEMTPSSEASEPVQNGNLSHSIEAADAPQATETAEEDDDQPLSLSWPSNTRKQITFLIVLPIVFPLWITLPDVRKPASKKFFPITFFGSITWIAVFSYLMVWWAHQVGETIGISEEIMGLTILAAGTSIPDLITSVIVARKGLGDMAVSSSVGSNIFDITVGLPLPWLLYTIIHRFKPVTVSSNGLFCAIVLLFIMLIFVILSIALCKWRMNKILGFIMFGLYFAFLVVSVLLEDKVLECPVSI.

At 1-38 (MDLHQSATVRLLQEWCSHESPSGCRRHYNTRKKLKLIR) the chain is on the cytoplasmic side. A helical transmembrane segment spans residues 39–59 (VIGLVMGLVAVSTVPFSISAF). Residues 60–133 (TETYSQNNRG…DVFSLEERRK (74 aa)) are Extracellular-facing. Disordered stretches follow at residues 67-86 (NRGE…HRQR) and 91-122 (LNDK…GDYP). The span at 106–122 (QEDRSENGTDHAQGDYP) shows a compositional bias: basic and acidic residues. Asn-112 carries an N-linked (GlcNAc...) asparagine glycan. A helical membrane pass occupies residues 134 to 154 (GAIILHVIGMIYMFIALAIVC). At 155-179 (DEFFVPSLTVITEKLGISDDVAGAT) the chain is on the cytoplasmic side. The Alpha-1 repeat unit spans residues 175–215 (VAGATFMAAGGSAPELFTSLIGVFIAHSNVGIGTIVGSAVF). Residues 180–200 (FMAAGGSAPELFTSLIGVFIA) form a helical membrane-spanning segment. At 201-205 (HSNVG) the chain is on the extracellular side. The helical transmembrane segment at 206–226 (IGTIVGSAVFNILFVIGMCAL) threads the bilayer. Over 227–244 (FSREILNLTWWPLFRDVS) the chain is Cytoplasmic. A helical transmembrane segment spans residues 245 to 265 (FYIVDLIMLIIFFLDNVIMWW). Residue Glu-266 is a topological domain, extracellular. Residues 267-287 (SLLLLTAYFAYVVFMKFNVQV) traverse the membrane as a helical segment. Residues 288–506 (ERWVKQMINR…PDVRKPASKK (219 aa)) are Cytoplasmic-facing. The interval 312-335 (ASTAGDKEEPTLPNKPRLQRGGSS) is disordered. Phosphoserine occurs at positions 337 and 341. Disordered regions lie at residues 394 to 414 (KCQV…DYAA) and 450 to 471 (AADA…LSLS). A helical membrane pass occupies residues 507–527 (FFPITFFGSITWIAVFSYLMV). The Extracellular portion of the chain corresponds to 528–542 (WWAHQVGETIGISEE). Residues 543-563 (IMGLTILAAGTSIPDLITSVI) form a helical membrane-spanning segment. An Alpha-2 repeat occupies 550–581 (AAGTSIPDLITSVIVARKGLGDMAVSSSVGSN). Over 564-578 (VARKGLGDMAVSSSV) the chain is Cytoplasmic. Residues 579 to 599 (GSNIFDITVGLPLPWLLYTII) form a helical membrane-spanning segment. Residues 600–611 (HRFKPVTVSSNG) lie on the Extracellular side of the membrane. Residues 612–632 (LFCAIVLLFIMLIFVILSIAL) form a helical membrane-spanning segment. Residues 633–639 (CKWRMNK) are Cytoplasmic-facing. A helical transmembrane segment spans residues 640–660 (ILGFIMFGLYFAFLVVSVLLE). Residues 661–670 (DKVLECPVSI) lie on the Extracellular side of the membrane.

The protein belongs to the Ca(2+):cation antiporter (CaCA) (TC 2.A.19) family. SLC24A subfamily. Expressed abundantly in all regions of the brain and weakly in the eye, large intestine and adrenal tissue.

It localises to the cell membrane. The catalysed reaction is Ca(2+)(out) + K(+)(out) + 4 Na(+)(in) = Ca(2+)(in) + K(+)(in) + 4 Na(+)(out). Calcium, potassium:sodium antiporter that transports 1 Ca(2+) and 1 K(+) in exchange for 4 Na(+). Required for learming and memory by regulating neuronal Ca(2+), which is essential for the development of synaptic plasticity. This is Sodium/potassium/calcium exchanger 2 (Slc24a2) from Rattus norvegicus (Rat).